The following is an 89-amino-acid chain: Small ribosomal subunit protein uS15 (89 aa).

The protein belongs to the universal ribosomal protein uS15 family. In terms of assembly, part of the 30S ribosomal subunit. Forms a bridge to the 50S subunit in the 70S ribosome, contacting the 23S rRNA.

One of the primary rRNA binding proteins, it binds directly to 16S rRNA where it helps nucleate assembly of the platform of the 30S subunit by binding and bridging several RNA helices of the 16S rRNA. In terms of biological role, forms an intersubunit bridge (bridge B4) with the 23S rRNA of the 50S subunit in the ribosome. The sequence is that of Small ribosomal subunit protein uS15 from Rhizobium leguminosarum bv. trifolii (strain WSM2304).